A 60-amino-acid chain; its full sequence is Large ribosomal subunit protein uL30 (60 aa).

Belongs to the universal ribosomal protein uL30 family. As to quaternary structure, part of the 50S ribosomal subunit.

This chain is Large ribosomal subunit protein uL30, found in Cupriavidus necator (strain ATCC 17699 / DSM 428 / KCTC 22496 / NCIMB 10442 / H16 / Stanier 337) (Ralstonia eutropha).